A 207-amino-acid chain; its full sequence is MTEKLKNSKEVIAYIAECFPKCFTLEGEAKPLKIGIFQDLAERLSEDEKVSKTQLRAALRQYTSSWRYLHGVKLGATRVDLDGNECGVLEEEHVEHAKATLAESKAKVQARRKEQAQKARDEEKSKPKTKKAPQQRRANKPQAQKPAKQPVETRALNADELITGKAVNVNMGKGNMAATIVEINKDDVRVQLSNGLQMVVKAEHLRA.

Residues 100 to 156 are disordered; sequence TLAESKAKVQARRKEQAQKARDEEKSKPKTKKAPQQRRANKPQAQKPAKQPVETRAL. The segment covering 111-126 has biased composition (basic and acidic residues); it reads RRKEQAQKARDEEKSK. Residues 127–139 are compositionally biased toward basic residues; the sequence is PKTKKAPQQRRAN.

This sequence belongs to the ProQ family.

It is found in the cytoplasm. RNA chaperone with significant RNA binding, RNA strand exchange and RNA duplexing activities. This Vibrio vulnificus (strain CMCP6) protein is RNA chaperone ProQ.